Reading from the N-terminus, the 578-residue chain is Type I restriction enzyme MjaVIII methylase subunit (578 aa).

S-adenosyl-L-methionine contacts are provided by residues 250–255, 280–282, glutamate 303, and 332–333; these read EVYTPI, SGS, and DS.

This sequence belongs to the N(4)/N(6)-methyltransferase family. In terms of assembly, the type I restriction/modification system is composed of three polypeptides R, M and S.

The catalysed reaction is a 2'-deoxyadenosine in DNA + S-adenosyl-L-methionine = an N(6)-methyl-2'-deoxyadenosine in DNA + S-adenosyl-L-homocysteine + H(+). Functionally, the subtype gamma methyltransferase (M) subunit of a type I restriction enzyme. The M and S subunits together form a methyltransferase (MTase) that methylates A-2 on the top and A-3 on the bottom strand of the sequence 5'-GAYN(5)GTAA-3'. In the presence of the R subunit the complex can also act as an endonuclease, binding to the same target sequence but cutting the DNA some distance from this site. Whether the DNA is cut or modified depends on the methylation state of the target sequence. When the target site is unmodified, the DNA is cut. When the target site is hemimethylated, the complex acts as a maintenance MTase modifying the DNA so that both strands become methylated. After locating a non-methylated recognition site, the enzyme complex serves as a molecular motor that translocates DNA in an ATP-dependent manner until a collision occurs that triggers cleavage. This is Type I restriction enzyme MjaVIII methylase subunit from Methanocaldococcus jannaschii (strain ATCC 43067 / DSM 2661 / JAL-1 / JCM 10045 / NBRC 100440) (Methanococcus jannaschii).